A 120-amino-acid polypeptide reads, in one-letter code: Large ribosomal subunit protein uL18 (120 aa).

It belongs to the universal ribosomal protein uL18 family. In terms of assembly, part of the 50S ribosomal subunit; part of the 5S rRNA/L5/L18/L25 subcomplex. Contacts the 5S and 23S rRNAs.

Its function is as follows. This is one of the proteins that bind and probably mediate the attachment of the 5S RNA into the large ribosomal subunit, where it forms part of the central protuberance. The chain is Large ribosomal subunit protein uL18 from Methylobacterium sp. (strain 4-46).